The following is a 120-amino-acid chain: Peptidyl-tRNA hydrolase (120 aa).

This sequence belongs to the PTH2 family.

It is found in the cytoplasm. The catalysed reaction is an N-acyl-L-alpha-aminoacyl-tRNA + H2O = an N-acyl-L-amino acid + a tRNA + H(+). The natural substrate for this enzyme may be peptidyl-tRNAs which drop off the ribosome during protein synthesis. The chain is Peptidyl-tRNA hydrolase from Pyrobaculum aerophilum (strain ATCC 51768 / DSM 7523 / JCM 9630 / CIP 104966 / NBRC 100827 / IM2).